The following is a 944-amino-acid chain: Protocadherin gamma-C5 (944 aa).

A signal peptide spans 1 to 29; the sequence is MGPKTLPQLAGKWQVLCMLSLCCWGWVSG. Cadherin domains are found at residues 30–133, 134–242, 243–350, 351–454, 455–564, and 571–677; these read QLRY…SPSF, ATPE…APTF, QSSV…APEV, LLAS…APRF, NQQL…APAV, and WEHS…MPKS. The Extracellular segment spans residues 30–693; sequence QLRYSVVEES…PPERSDLTLY (664 aa). Residues N265, N443, and N547 are each glycosylated (N-linked (GlcNAc...) asparagine). A helical transmembrane segment spans residues 694–714; it reads LIVALATVSLLSLVTFTFLSA. Over 715 to 944 the chain is Cytoplasmic; sequence KCLQGNADGD…KKKSGKKEKK (230 aa). Disordered regions lie at residues 722 to 747, 812 to 853, and 914 to 944; these read DGDG…QSSP, SNTL…WPNN, and ATLT…KEKK. Residues 820-853 are compositionally biased toward polar residues; the sequence is QQAPPNTDWRFSQAQRPGTSGSQNGDDTGTWPNN. Positions 934–944 are enriched in basic residues; it reads NKKKSGKKEKK.

Its subcellular location is the cell membrane. Potential calcium-dependent cell-adhesion protein. May be involved in the establishment and maintenance of specific neuronal connections in the brain. This is Protocadherin gamma-C5 (PCDHGC5) from Homo sapiens (Human).